A 299-amino-acid polypeptide reads, in one-letter code: Taste receptor type 2 member 5 (299 aa).

A topological domain (extracellular) is located at residue Met1. The chain crosses the membrane as a helical span at residues 2 to 22 (LSAGLGLLMLVAVIEFLIGLI). Residues 23 to 45 (GNGILVVWSLREWIRKFSWSSYN) lie on the Cytoplasmic side of the membrane. A helical membrane pass occupies residues 46-66 (LIILGLAGCRFLLQWLIILDL). The Extracellular portion of the chain corresponds to 67 to 82 (SLFPLFQSSSWLRYLN). A helical transmembrane segment spans residues 83-103 (VFWVLVSQASLWFATFLSVFY). Topologically, residues 104-127 (CKKITTFDRPAYLWLKQRAYNLSL) are cytoplasmic. A helical membrane pass occupies residues 128 to 148 (WCLLGYFIISLLLTVQVGLTV). The Extracellular portion of the chain corresponds to 149–175 (HHPPQGNSSIRYPFEHWQYLYVFQLNS). N-linked (GlcNAc...) asparagine glycosylation occurs at Asn155. A helical transmembrane segment spans residues 176–196 (GSYLPLMVFLVSSGMLIISLY). Over 197 to 223 (THHKKMKVHSAGRRDARAKAHITALKS) the chain is Cytoplasmic. A helical transmembrane segment spans residues 224 to 244 (LGCFLLLHLVYIVASPFSITS). The Extracellular segment spans residues 245–253 (KTYPPDLTS). The chain crosses the membrane as a helical span at residues 254–274 (VFIWETLMAAYPSLHSLMLIM). The Cytoplasmic segment spans residues 275 to 299 (GIPRVKQTCQKILWKTVCARRCWGP).

This sequence belongs to the G-protein coupled receptor T2R family.

The protein resides in the membrane. Its function is as follows. Receptor that may play a role in the perception of bitterness and is gustducin-linked. May play a role in sensing the chemical composition of the gastrointestinal content. The activity of this receptor may stimulate alpha gustducin, mediate PLC-beta-2 activation and lead to the gating of TRPM5. This Papio hamadryas (Hamadryas baboon) protein is Taste receptor type 2 member 5 (TAS2R5).